Consider the following 145-residue polypeptide: Large ribosomal subunit protein uL11 (145 aa).

The protein belongs to the universal ribosomal protein uL11 family. Part of the ribosomal stalk of the 50S ribosomal subunit. Interacts with L10 and the large rRNA to form the base of the stalk. L10 forms an elongated spine to which L12 dimers bind in a sequential fashion forming a multimeric L10(L12)X complex. Post-translationally, one or more lysine residues are methylated.

Its function is as follows. Forms part of the ribosomal stalk which helps the ribosome interact with GTP-bound translation factors. In Porphyromonas gingivalis (strain ATCC 33277 / DSM 20709 / CIP 103683 / JCM 12257 / NCTC 11834 / 2561), this protein is Large ribosomal subunit protein uL11.